Here is a 448-residue protein sequence, read N- to C-terminus: Deoxyguanosinetriphosphate triphosphohydrolase-like protein (448 aa).

In terms of domain architecture, HD spans 67–260 (RLTHSLEVSQ…MELADDIAYG (194 aa)).

It belongs to the dGTPase family. Type 2 subfamily.

In Aliivibrio fischeri (strain MJ11) (Vibrio fischeri), this protein is Deoxyguanosinetriphosphate triphosphohydrolase-like protein.